A 389-amino-acid chain; its full sequence is Geodin cluster transcriptional coactivator gedD (389 aa).

The 71-residue stretch at 13–83 folds into the HTH iclR-type domain; that stretch reads LAWHVQLLAC…QPGQIMHTPL (71 aa). The segment at residues 43–62 is a DNA-binding region (H-T-H motif); it reads VRDLAQLCGVSETTLSRVVR.

Its subcellular location is the nucleus. Transcriptional coactivator; part of the gene cluster that mediates the biosynthesis of geodin, an intermediate in the biosynthesis of other natural products. With gedR, coregulates the production of geodin. The protein is Geodin cluster transcriptional coactivator gedD (gedD) of Aspergillus terreus (strain NIH 2624 / FGSC A1156).